Consider the following 536-residue polypeptide: CRISPR-associated DNA-binding protein Cas12m (536 aa).

A recognition domain (REC1-N) region spans residues 1–59 (MPFGKKARHVKAYQFGADAPQEGMEAVLEQHRLRTDYYNALVEMELRQREERTALLANL). A recognition domain (REC2) region spans residues 60 to 105 (AAESGLESPNQVYERLKAAGEKGIRKHPEYVAARERQKALYGHPRL). Residues 106-159 (LELQSRQREERNALRRSFGAKGLYSSNYLDVERAFDKARQSPELRFRRYSPHEG) form a recognition domain (REC1-C) region. A wedge domain (WED) region spans residues 160–257 (RLAVLYTEGL…RWTVSVVVEV (98 aa)). The segment at 258 to 270 (EGPPVASPTGRGA) is linker. Residues 271-481 (VAVDLGWRRV…QRGKPVRKLN (211 aa)) are ruvC-I. Residues 482 to 516 (PAHTTTDCHACGGALVGDPAKELRLYCPTCERFYD) form a target nucleic-acid binding (TNB) region. Positions 489, 492, 508, and 511 each coordinate Zn(2+). The segment at 517-536 (QDENAARNLLRRAQEVQAQV) is ruvC-II. Asp-518 serves as a coordination point for Mg(2+).

Belongs to the CRISPR-associated DNA-binding protein Cas12m family. Mg(2+) serves as cofactor. Requires Zn(2+) as cofactor.

Its activity is regulated as follows. Pre-crRNA processing is inhibited by EDTA. Functionally, CRISPR (clustered regularly interspaced short palindromic repeat), is an adaptive immune system that provides protection against mobile genetic elements (viruses, transposable elements and conjugative plasmids). CRISPR clusters contain sequences complementary to antecedent mobile elements and target invading nucleic acids. CRISPR clusters are transcribed and processed into CRISPR RNA (crRNA). Recognizes a short motif in the CRISPR repeat sequences (the 5' PAM or protospacer adjacent motif, 5'-TT/CN-3' in this organism) to help distinguish self versus nonself, as targets within the bacterial CRISPR locus do not have PAMs. Cas12m-crRNA binds DNA in a PAM-dependent, crRNA-guided fashion. DNA-binding probably inhibits transcription, leading to gene silencing. No dsDNA, ssDNA or RNA nuclease activity is seen for the crRNA-Cas12m complex. Upon expression in E.coli as a CRISPR region preferentially binds to its associated crRNA. Is required to process pre-crRNA to mature crRNA without a tracrRNA; processing is Mg(2+)-dependent and does not require the predicted RuvC domain catalytic site. The polypeptide is CRISPR-associated DNA-binding protein Cas12m (Allomeiothermus silvanus (strain ATCC 700542 / DSM 9946 / NBRC 106475 / NCIMB 13440 / VI-R2) (Thermus silvanus)).